The following is a 225-amino-acid chain: 2-C-methyl-D-erythritol 4-phosphate cytidylyltransferase (225 aa).

Belongs to the IspD/TarI cytidylyltransferase family. IspD subfamily.

It carries out the reaction 2-C-methyl-D-erythritol 4-phosphate + CTP + H(+) = 4-CDP-2-C-methyl-D-erythritol + diphosphate. The protein operates within isoprenoid biosynthesis; isopentenyl diphosphate biosynthesis via DXP pathway; isopentenyl diphosphate from 1-deoxy-D-xylulose 5-phosphate: step 2/6. Catalyzes the formation of 4-diphosphocytidyl-2-C-methyl-D-erythritol from CTP and 2-C-methyl-D-erythritol 4-phosphate (MEP). The polypeptide is 2-C-methyl-D-erythritol 4-phosphate cytidylyltransferase (Haemophilus influenzae (strain 86-028NP)).